The sequence spans 353 residues: Phosphate acyltransferase (353 aa).

This sequence belongs to the PlsX family. As to quaternary structure, homodimer. Probably interacts with PlsY.

The protein resides in the cytoplasm. It carries out the reaction a fatty acyl-[ACP] + phosphate = an acyl phosphate + holo-[ACP]. Its pathway is lipid metabolism; phospholipid metabolism. Its function is as follows. Catalyzes the reversible formation of acyl-phosphate (acyl-PO(4)) from acyl-[acyl-carrier-protein] (acyl-ACP). This enzyme utilizes acyl-ACP as fatty acyl donor, but not acyl-CoA. The sequence is that of Phosphate acyltransferase from Myxococcus xanthus (strain DK1622).